Reading from the N-terminus, the 648-residue chain is Macrolide export ATP-binding/permease protein MacB (648 aa).

Residues Leu5–Thr243 enclose the ABC transporter domain. Gly41–Ser48 contacts ATP. 4 helical membrane-spanning segments follow: residues Leu273–Gly293, Leu523–Ile543, Ala576–Phe596, and Pro611–Leu631.

It belongs to the ABC transporter superfamily. Macrolide exporter (TC 3.A.1.122) family. In terms of assembly, homodimer. Part of the tripartite efflux system MacAB-TolC, which is composed of an inner membrane transporter, MacB, a periplasmic membrane fusion protein, MacA, and an outer membrane component, TolC. The complex forms a large protein conduit and can translocate molecules across both the inner and outer membranes. Interacts with MacA.

It is found in the cell inner membrane. In terms of biological role, part of the tripartite efflux system MacAB-TolC. MacB is a non-canonical ABC transporter that contains transmembrane domains (TMD), which form a pore in the inner membrane, and an ATP-binding domain (NBD), which is responsible for energy generation. Confers resistance against macrolides. The chain is Macrolide export ATP-binding/permease protein MacB from Escherichia coli O157:H7.